The primary structure comprises 271 residues: Phosphatidylglycerol--prolipoprotein diacylglyceryl transferase (271 aa).

4 helical membrane-spanning segments follow: residues 18–38, 51–71, 89–109, and 115–135; these read LSVH…LWMA, IFID…RAYY, IWKG…TGIV, and GISF…GQAI. R137 lines the a 1,2-diacyl-sn-glycero-3-phospho-(1'-sn-glycerol) pocket. 3 helical membrane passes run 177–197, 205–225, and 236–256; these read HPTF…LLLL, GNLF…IEGM, and LRIA…LMIF.

Belongs to the Lgt family.

It is found in the cell membrane. It catalyses the reaction L-cysteinyl-[prolipoprotein] + a 1,2-diacyl-sn-glycero-3-phospho-(1'-sn-glycerol) = an S-1,2-diacyl-sn-glyceryl-L-cysteinyl-[prolipoprotein] + sn-glycerol 1-phosphate + H(+). Its pathway is protein modification; lipoprotein biosynthesis (diacylglyceryl transfer). Catalyzes the transfer of the diacylglyceryl group from phosphatidylglycerol to the sulfhydryl group of the N-terminal cysteine of a prolipoprotein, the first step in the formation of mature lipoproteins. The sequence is that of Phosphatidylglycerol--prolipoprotein diacylglyceryl transferase from Bacillus velezensis (strain DSM 23117 / BGSC 10A6 / LMG 26770 / FZB42) (Bacillus amyloliquefaciens subsp. plantarum).